We begin with the raw amino-acid sequence, 1183 residues long: MAGKFVQYGRHRKRRNYARISEVLELPNLIEIQTKSYDWFLKEGLLEMFRDISPIEDFTGNLSLEFVDYRLGEPKYDLEESKNRDATYAAPLRVKVRLINKETGEVKDQEVFMGDFPLMTDTGTFVINGAERVIVSQLVRSPSVYFNEKIDKNGRENYDATVIPNRGAWLEFETDAKDIVYVRIDRTRKLPLTVLLRALGYSTDQSIIDLLGDNEYLRNTLEKDSTENTEQALLEIYERLRPGEPPTVENAKSLLYSRFFDPKRYDLASVGRYKMNKKLHLKHRLFNQKLAEPIVNSDTGEIVAEEGTVLDRRKLDEIMDVLESNANIEVDELDDSIVNEPVEIQSIKVYVPNDEEGRTTTVIGNAFPDSEVKCITPADIVASMSYFFNLLHGIGQTDDIDHLGNRRLRSVGELLQNQFRIGLSRMERVVRERMSIQDTDSITPQQLINIRPVIASIKEFFGSSQLSQFMDQANPLAELTHKRRLSALGPGGLTRERAQMEVRDVHYSHYGRMCPIETPEGPNIGLINSLSSYARVNEFGFIETPYRKVDLETNTVTDQIDYLTADEEDSYVVAQANSRLDDEGHFISEEVVCRFRGNNTMMDRDKMDYMDVSPKQVVSAATACIPFLENDDSNRALMGANMQRQAVPLMNPESPFVGTGMEHATARDSGAAVINKHFGRVEHVESNEIKVRRIIEEDGQQYDGELDTYRLAKFKRSNSGTCYNQRPIVKDGDIVSQGEILADGPSMELGEMALGRNVVVGFMTWDGYNYEDAVIMSERLVKDDVYTSIHIEEYESEARDTKLGPEEITRDIPNVAESALKNLDERGIVYVGAEVKDGDILVGKVTPKGVTELTAEERLLHAIFGEKAREVRDTSLRVPHGAGGIVLDVKVFNREDGDDSLSPGVNQLVRVYIVQKRKIHVGDKMCGRHGNKGVISKIVPEEDMPYLPDGTPIDIMLNPLGVPSRMNIGQVLELHLGMAAKNLGIHVASPVFDGANDDDVWSTIEEAGMARDGKTVLYDGRTGEPFDNRISVGVMYMLKLAHMVDDKLHARSTGPYSLVTQQPLGGKAQFGGQRFGEMEVWALEAYGAAYTLQEILTYKSDDTVGRVKTYEAIVKGENISKPSVPESFRVLMKELQSLGLDVKVMDEDDKEIEMADVDEDDVNEHKVNIQQSSIPESQKETTD.

The interval 1155-1183 (ADVDEDDVNEHKVNIQQSSIPESQKETTD) is disordered.

Belongs to the RNA polymerase beta chain family. The RNAP catalytic core consists of 2 alpha, 1 beta, 1 beta' and 1 omega subunit. When a sigma factor is associated with the core the holoenzyme is formed, which can initiate transcription.

The enzyme catalyses RNA(n) + a ribonucleoside 5'-triphosphate = RNA(n+1) + diphosphate. DNA-dependent RNA polymerase catalyzes the transcription of DNA into RNA using the four ribonucleoside triphosphates as substrates. The polypeptide is DNA-directed RNA polymerase subunit beta (Staphylococcus carnosus (strain TM300)).